The sequence spans 585 residues: uncharacterized protein (585 aa).

Residues 27–59 (DDSERSVKSVSVSISDDEDSKTDVQDNMATPST) are disordered.

This is an uncharacterized protein from Saccharomyces cerevisiae (strain ATCC 204508 / S288c) (Baker's yeast).